A 345-amino-acid chain; its full sequence is tRNA-specific 2-thiouridylase MnmA (345 aa).

ATP is bound by residues Ala6 to Ser13 and Leu32. The active-site Nucleophile is Cys100. Cysteines 100 and 197 form a disulfide. Position 124 (Gly124) interacts with ATP. An interaction with tRNA region spans residues Arg146 to Gln148. Cys197 serves as the catalytic Cysteine persulfide intermediate.

The protein belongs to the MnmA/TRMU family.

It is found in the cytoplasm. The catalysed reaction is S-sulfanyl-L-cysteinyl-[protein] + uridine(34) in tRNA + AH2 + ATP = 2-thiouridine(34) in tRNA + L-cysteinyl-[protein] + A + AMP + diphosphate + H(+). In terms of biological role, catalyzes the 2-thiolation of uridine at the wobble position (U34) of tRNA, leading to the formation of s(2)U34. The protein is tRNA-specific 2-thiouridylase MnmA of Acidiphilium cryptum (strain JF-5).